Here is a 198-residue protein sequence, read N- to C-terminus: ADP-ribosylation factor-like protein 3 (198 aa).

Met-1 is subject to N-acetylmethionine. 24–31 (GLDNAGKT) contributes to the GTP binding site. Lys-50 is covalently cross-linked (Glycyl lysine isopeptide (Lys-Gly) (interchain with G-Cter in ubiquitin)). Residues 74 to 78 (DVGGQ) and 133 to 136 (NKQD) each bind GTP.

The protein belongs to the small GTPase superfamily. Arf family. In terms of assembly, interacts with SYS1 and SLO1.

It localises to the golgi apparatus. Its function is as follows. Involved in the targeting of ARL1 to the Golgi. Can bind and hydrolyze GTP. This Saccharomyces cerevisiae (strain ATCC 204508 / S288c) (Baker's yeast) protein is ADP-ribosylation factor-like protein 3 (ARL3).